Here is a 426-residue protein sequence, read N- to C-terminus: Spermidine/putrescine import ATP-binding protein PotA (426 aa).

Positions 6–238 constitute an ABC transporter domain; that stretch reads IEFKNVSKTY…PINHFVADFI (233 aa). 40 to 47 serves as a coordination point for ATP; sequence GASGSGKS.

The protein belongs to the ABC transporter superfamily. Spermidine/putrescine importer (TC 3.A.1.11.1) family. The complex is composed of two ATP-binding proteins (PotA), two transmembrane proteins (PotB and PotC) and a solute-binding protein (PotD).

Its subcellular location is the cell membrane. It catalyses the reaction ATP + H2O + polyamine-[polyamine-binding protein]Side 1 = ADP + phosphate + polyamineSide 2 + [polyamine-binding protein]Side 1.. Functionally, part of the ABC transporter complex PotABCD involved in spermidine/putrescine import. Responsible for energy coupling to the transport system. The polypeptide is Spermidine/putrescine import ATP-binding protein PotA (Lactococcus lactis subsp. cremoris (strain SK11)).